Consider the following 129-residue polypeptide: Phosphoribosyl-AMP cyclohydrolase (129 aa).

Aspartate 78 contacts Mg(2+). Cysteine 79 is a Zn(2+) binding site. Mg(2+) is bound by residues aspartate 80 and aspartate 82. Zn(2+)-binding residues include cysteine 96 and cysteine 103.

Belongs to the PRA-CH family. In terms of assembly, homodimer. Mg(2+) is required as a cofactor. It depends on Zn(2+) as a cofactor.

It is found in the cytoplasm. It carries out the reaction 1-(5-phospho-beta-D-ribosyl)-5'-AMP + H2O = 1-(5-phospho-beta-D-ribosyl)-5-[(5-phospho-beta-D-ribosylamino)methylideneamino]imidazole-4-carboxamide. Its pathway is amino-acid biosynthesis; L-histidine biosynthesis; L-histidine from 5-phospho-alpha-D-ribose 1-diphosphate: step 3/9. Catalyzes the hydrolysis of the adenine ring of phosphoribosyl-AMP. The sequence is that of Phosphoribosyl-AMP cyclohydrolase from Nitrosomonas eutropha (strain DSM 101675 / C91 / Nm57).